The chain runs to 410 residues: Large ribosomal subunit protein uL4 (410 aa).

Belongs to the universal ribosomal protein uL4 family.

Its subcellular location is the cytoplasm. This chain is Large ribosomal subunit protein uL4 (RPL4), found in Tetrahymena thermophila (strain SB210).